The sequence spans 320 residues: Aspartate carbamoyltransferase catalytic subunit (320 aa).

Positions 57 and 58 each coordinate carbamoyl phosphate. Lys-85 is a binding site for L-aspartate. 3 residues coordinate carbamoyl phosphate: Arg-107, His-141, and Gln-144. Residues Arg-174 and Arg-228 each contribute to the L-aspartate site. Carbamoyl phosphate-binding residues include Gly-269 and Pro-270.

The protein belongs to the aspartate/ornithine carbamoyltransferase superfamily. ATCase family. In terms of assembly, heterododecamer (2C3:3R2) of six catalytic PyrB chains organized as two trimers (C3), and six regulatory PyrI chains organized as three dimers (R2).

The catalysed reaction is carbamoyl phosphate + L-aspartate = N-carbamoyl-L-aspartate + phosphate + H(+). It functions in the pathway pyrimidine metabolism; UMP biosynthesis via de novo pathway; (S)-dihydroorotate from bicarbonate: step 2/3. Catalyzes the condensation of carbamoyl phosphate and aspartate to form carbamoyl aspartate and inorganic phosphate, the committed step in the de novo pyrimidine nucleotide biosynthesis pathway. The protein is Aspartate carbamoyltransferase catalytic subunit of Mycobacterium ulcerans (strain Agy99).